We begin with the raw amino-acid sequence, 883 residues long: Valine--tRNA ligase (883 aa).

Positions 46 to 56 (PNVTGKLHLGH) match the 'HIGH' region motif. Positions 520 to 524 (KMSKS) match the 'KMSKS' region motif. An ATP-binding site is contributed by lysine 523. Positions 809-844 (LVDLLNVEEELARLEKELAKWQKELDMVGKKLSNER) form a coiled coil.

This sequence belongs to the class-I aminoacyl-tRNA synthetase family. ValS type 1 subfamily. Monomer.

The protein resides in the cytoplasm. The enzyme catalyses tRNA(Val) + L-valine + ATP = L-valyl-tRNA(Val) + AMP + diphosphate. In terms of biological role, catalyzes the attachment of valine to tRNA(Val). As ValRS can inadvertently accommodate and process structurally similar amino acids such as threonine, to avoid such errors, it has a 'posttransfer' editing activity that hydrolyzes mischarged Thr-tRNA(Val) in a tRNA-dependent manner. The polypeptide is Valine--tRNA ligase (Streptococcus pneumoniae (strain ATCC BAA-255 / R6)).